Here is a 231-residue protein sequence, read N- to C-terminus: 7-cyano-7-deazaguanine synthase (231 aa).

Position 8–18 (8–18 (FSGGQDSTTCL)) interacts with ATP. Zn(2+)-binding residues include C188, C197, C200, and C203.

It belongs to the QueC family. The cofactor is Zn(2+).

It carries out the reaction 7-carboxy-7-deazaguanine + NH4(+) + ATP = 7-cyano-7-deazaguanine + ADP + phosphate + H2O + H(+). It functions in the pathway purine metabolism; 7-cyano-7-deazaguanine biosynthesis. Its function is as follows. Catalyzes the ATP-dependent conversion of 7-carboxy-7-deazaguanine (CDG) to 7-cyano-7-deazaguanine (preQ(0)). The sequence is that of 7-cyano-7-deazaguanine synthase from Salmonella agona (strain SL483).